A 137-amino-acid polypeptide reads, in one-letter code: Histone H2B.3 (137 aa).

The segment covering 1 to 37 (KPAEKKPAEKTPVAEKAPAEKKPKAGKKLPKDAAAGD) has biased composition (basic and acidic residues). Residues 1–45 (KPAEKKPAEKTPVAEKAPAEKKPKAGKKLPKDAAAGDKKKKRSKK) are disordered. N6-acetyllysine occurs at positions 27 and 28. Lys-133 participates in a covalent cross-link: Glycyl lysine isopeptide (Lys-Gly) (interchain with G-Cter in ubiquitin).

This sequence belongs to the histone H2B family. In terms of assembly, the nucleosome is a histone octamer containing two molecules each of H2A, H2B, H3 and H4 assembled in one H3-H4 heterotetramer and two H2A-H2B heterodimers. The octamer wraps approximately 147 bp of DNA. Can be acetylated to formH2BK33ac and H2BK34ac. In terms of processing, monoubiquitinated to form H2BK143ub1; may give a specific tag for epigenetic transcriptional activation. Ubiquitous. Highest level in shoots, fruits and young flower buds, including petals, anthers and ovules.

The protein resides in the nucleus. The protein localises to the chromosome. Functionally, core component of nucleosome. Nucleosomes wrap and compact DNA into chromatin, limiting DNA accessibility to the cellular machineries which require DNA as a template. Histones thereby play a central role in transcription regulation, DNA repair, DNA replication and chromosomal stability. DNA accessibility is regulated via a complex set of post-translational modifications of histones, also called histone code, and nucleosome remodeling. The polypeptide is Histone H2B.3 (H2B-3) (Solanum lycopersicum (Tomato)).